The sequence spans 297 residues: MLDNKDIATPSRTRALLDKYGFNFKKSLGQNFLIDVNIINNIIDASDIDAQTGVIEIGPGIGSLTEQLARHAKRVLAFEIDQRLIPVLNDTLSPYDNVTVINEDILKANIKEAVENHLQDCEKIMVVANLPYYITTPILLNLMQQDIPIDGYVVMMQKEVGERLNAEVGSKAYGSLSIVVQYYTETSKVLTVPKSVFMPPPNVDSIVVKLMQRTEPLVTVDNEEAFFKLAKAAFAQRRKTINNNYQNYFKDGKQHKEVILQWLEQAGIDPRRRGETLSIQDFAKLYEEKKKFPQLEN.

The S-adenosyl-L-methionine site is built by Asn31, Leu33, Gly58, Glu79, Asp104, and Asn129.

It belongs to the class I-like SAM-binding methyltransferase superfamily. rRNA adenine N(6)-methyltransferase family. RsmA subfamily.

It is found in the cytoplasm. It carries out the reaction adenosine(1518)/adenosine(1519) in 16S rRNA + 4 S-adenosyl-L-methionine = N(6)-dimethyladenosine(1518)/N(6)-dimethyladenosine(1519) in 16S rRNA + 4 S-adenosyl-L-homocysteine + 4 H(+). In terms of biological role, specifically dimethylates two adjacent adenosines (A1518 and A1519) in the loop of a conserved hairpin near the 3'-end of 16S rRNA in the 30S particle. May play a critical role in biogenesis of 30S subunits. The chain is Ribosomal RNA small subunit methyltransferase A from Staphylococcus aureus (strain Newman).